The sequence spans 160 residues: Thioredoxin-like protein 4A homolog (160 aa).

The segment at 132–160 (KFLKKKKKKKNKKKQKKKIKKIKKKIKNN) is disordered. Basic residues predominate over residues 133 to 160 (FLKKKKKKKNKKKQKKKIKKIKKKIKNN).

Belongs to the DIM1 family. As to quaternary structure, component of the precatalytic spliceosome (spliceosome B complex). Component of the U5 snRNP complex. Component of the U4/U6-U5 tri-snRNP complex.

The protein resides in the nucleus. Plays a role in pre-mRNA splicing as component of the U5 snRNP and U4/U6-U5 tri-snRNP complexes that are involved in spliceosome assembly, and as component of the precatalytic spliceosome (spliceosome B complex). In Dictyostelium discoideum (Social amoeba), this protein is Thioredoxin-like protein 4A homolog (txnl4a).